The sequence spans 61 residues: Large ribosomal subunit protein bL32c (61 aa).

Residues 37 to 61 form a disordered region; that stretch reads SRSFSSGNEHPKPKGFSGQQQQTNK.

Belongs to the bacterial ribosomal protein bL32 family.

The protein localises to the plastid. Its subcellular location is the chloroplast. In Agrostis stolonifera (Creeping bentgrass), this protein is Large ribosomal subunit protein bL32c.